Here is a 296-residue protein sequence, read N- to C-terminus: Ribonuclease HIII (296 aa).

Residues 80–296 (LALIGSDEVG…NTKKAYQRLK (217 aa)) enclose the RNase H type-2 domain. A divalent metal cation contacts are provided by aspartate 86, glutamate 87, and aspartate 191.

The protein belongs to the RNase HII family. RnhC subfamily. The cofactor is Mn(2+). Mg(2+) is required as a cofactor.

The protein resides in the cytoplasm. The catalysed reaction is Endonucleolytic cleavage to 5'-phosphomonoester.. Endonuclease that specifically degrades the RNA of RNA-DNA hybrids. This Streptococcus thermophilus (strain ATCC BAA-250 / LMG 18311) protein is Ribonuclease HIII.